The following is a 196-amino-acid chain: UMP-CMP kinase (196 aa).

13–18 (GAGKGT) provides a ligand contact to ATP. Ser33 is modified (phosphoserine). The NMP stretch occupies residues 33–63 (SAGELLRDERKNPDSQYGELIEKYIKEGKIV). Arg39 lines the a ribonucleoside 5'-phosphate pocket. N6-acetyllysine is present on residues Lys43 and Lys55. 61-63 (KIV) lines the a ribonucleoside 5'-phosphate pocket. Residue Lys73 forms a Glycyl lysine isopeptide (Lys-Gly) (interchain with G-Cter in SUMO2) linkage. A ribonucleoside 5'-phosphate is bound at residue 93 to 96 (GFPR). Asn100 contributes to the CMP binding site. The residue at position 106 (Lys106) is an N6-succinyllysine. An LID region spans residues 133–143 (ERGKSSGRSDD). Arg134 contacts ATP. The a ribonucleoside 5'-phosphate site is built by Arg140 and Arg151. Lys179 provides a ligand contact to ATP. Ser180 carries the post-translational modification Phosphoserine.

The protein belongs to the adenylate kinase family. UMP-CMP kinase subfamily. Monomer. Mg(2+) serves as cofactor.

Its subcellular location is the nucleus. It is found in the cytoplasm. It catalyses the reaction CMP + ATP = CDP + ADP. It carries out the reaction dCMP + ATP = dCDP + ADP. The enzyme catalyses UMP + ATP = UDP + ADP. The catalysed reaction is a 2'-deoxyribonucleoside 5'-diphosphate + ATP = a 2'-deoxyribonucleoside 5'-triphosphate + ADP. It catalyses the reaction a ribonucleoside 5'-diphosphate + ATP = a ribonucleoside 5'-triphosphate + ADP. Its function is as follows. Catalyzes the phosphorylation of pyrimidine nucleoside monophosphates at the expense of ATP. Plays an important role in de novo pyrimidine nucleotide biosynthesis. Has preference for UMP and CMP as phosphate acceptors. Also displays broad nucleoside diphosphate kinase activity. In Mus musculus (Mouse), this protein is UMP-CMP kinase (Cmpk1).